We begin with the raw amino-acid sequence, 427 residues long: MTLWVLGLNHQTAPVELRERAAFAGEALPRALGSLRDTPQIAEAVLLSTCNRTELYAVADSAQALDQWLHTQAGDLQGYLYQHADAEAVRHLFRVATGLDSMVLGEPQILGQVKDAWSTARDHGLLGQRLDRLFQQTFSVAKRARTDTQVGANPVSVASAAVRLAQNAFARLDDSTVLLVGAGETIELAARHLSEGKVRRLLIANRTLAHAQELASRHGGVALPLTELDRHLGEADVVFSATAAREPVIHREMVAKALRTRRHKPMLLFDLAVPRDIEADVATLNDAFLYTVDDLERAVEDNRRGRREAAAEAEAIIDLQVSRFVETQQASAHQAPLRQLRAFGEATRTELLERARQQLANGKPADEVLELLAHGLTNRLLHPPTAALRAAALSGDADLTRAAERLFPATPGYRHPPVRPDDADPAP.

Residues 49–52 (TCNR), S101, 106–108 (EPQ), and Q112 each bind substrate. The active-site Nucleophile is C50. Residue 181–186 (GAGETI) participates in NADP(+) binding. The disordered stretch occupies residues 407–427 (FPATPGYRHPPVRPDDADPAP). The segment covering 418–427 (VRPDDADPAP) has biased composition (basic and acidic residues).

Belongs to the glutamyl-tRNA reductase family. As to quaternary structure, homodimer.

The enzyme catalyses (S)-4-amino-5-oxopentanoate + tRNA(Glu) + NADP(+) = L-glutamyl-tRNA(Glu) + NADPH + H(+). The protein operates within porphyrin-containing compound metabolism; protoporphyrin-IX biosynthesis; 5-aminolevulinate from L-glutamyl-tRNA(Glu): step 1/2. Catalyzes the NADPH-dependent reduction of glutamyl-tRNA(Glu) to glutamate 1-semialdehyde (GSA). This chain is Glutamyl-tRNA reductase, found in Stenotrophomonas maltophilia (strain R551-3).